Consider the following 520-residue polypeptide: 2-isopropylmalate synthase (520 aa).

Residues 12-274 enclose the Pyruvate carboxyltransferase domain; the sequence is VIIFDTTLRD…WNKIDTTQLT (263 aa). Mn(2+)-binding residues include aspartate 21, histidine 209, histidine 211, and asparagine 245. Residues 398-520 form a regulatory domain region; it reads KLTSLTVIAG…RDTVTTAAAS (123 aa).

The protein belongs to the alpha-IPM synthase/homocitrate synthase family. LeuA type 1 subfamily. As to quaternary structure, homodimer. Mn(2+) is required as a cofactor.

Its subcellular location is the cytoplasm. The catalysed reaction is 3-methyl-2-oxobutanoate + acetyl-CoA + H2O = (2S)-2-isopropylmalate + CoA + H(+). It participates in amino-acid biosynthesis; L-leucine biosynthesis; L-leucine from 3-methyl-2-oxobutanoate: step 1/4. Catalyzes the condensation of the acetyl group of acetyl-CoA with 3-methyl-2-oxobutanoate (2-ketoisovalerate) to form 3-carboxy-3-hydroxy-4-methylpentanoate (2-isopropylmalate). In Bradyrhizobium diazoefficiens (strain JCM 10833 / BCRC 13528 / IAM 13628 / NBRC 14792 / USDA 110), this protein is 2-isopropylmalate synthase.